The sequence spans 357 residues: Arginine kinase (357 aa).

At alanine 2 the chain carries N-acetylalanine. The region spanning 9 to 91 (KLEEGFKKLE…FDPIIEDYHK (83 aa)) is the Phosphagen kinase N-terminal domain. Residue 64–68 (GVGVY) participates in L-arginine binding. The Phosphagen kinase C-terminal domain maps to 119–356 (FVISTRVRCG…LELIKIEKEM (238 aa)). Residues 122–126 (STRVR) and histidine 185 contribute to the ATP site. Position 225 (glutamate 225) interacts with L-arginine. Position 229 (arginine 229) interacts with ATP. Cysteine 271 is a binding site for L-arginine. Residues 280-284 (RASVH) and 309-314 (RGTRGE) each bind ATP. Glutamate 314 is a binding site for L-arginine.

Belongs to the ATP:guanido phosphotransferase family.

It catalyses the reaction L-arginine + ATP = N(omega)-phospho-L-arginine + ADP + H(+). The polypeptide is Arginine kinase (Carcinus maenas (Common shore crab)).